The following is a 328-amino-acid chain: G2/mitotic-specific cyclin-2 (328 aa).

It belongs to the cyclin family. Cyclin AB subfamily. As to quaternary structure, interacts with the CDC2 protein kinase to form a serine/threonine kinase holoenzyme complex also known as maturation promoting factor (MPF). The cyclin subunit imparts substrate specificity to the complex. Only expressed in organs with dividing cells.

In terms of biological role, essential for the control of the cell cycle at the G2/M (mitosis) transition. The polypeptide is G2/mitotic-specific cyclin-2 (Medicago sativa (Alfalfa)).